Consider the following 297-residue polypeptide: tRNA pseudouridine synthase B (297 aa).

The active-site Nucleophile is aspartate 44.

The protein belongs to the pseudouridine synthase TruB family. Type 1 subfamily.

The enzyme catalyses uridine(55) in tRNA = pseudouridine(55) in tRNA. Functionally, responsible for synthesis of pseudouridine from uracil-55 in the psi GC loop of transfer RNAs. The polypeptide is tRNA pseudouridine synthase B (Corynebacterium glutamicum (strain ATCC 13032 / DSM 20300 / JCM 1318 / BCRC 11384 / CCUG 27702 / LMG 3730 / NBRC 12168 / NCIMB 10025 / NRRL B-2784 / 534)).